Here is a 214-residue protein sequence, read N- to C-terminus: Transmembrane emp24 domain-containing protein p24beta3 (214 aa).

Residues 1–27 form the signal peptide; it reads MERRQAKIHVFVLIGLILLNSINQISS. Residues 28–178 lie on the Lumenal side of the membrane; sequence LSVTVNDEEC…RHTNESTRKR (151 aa). The GOLD domain maps to 35–122; that stretch reads EECVQEYVLY…PETVSFYIHV (88 aa). The stretch at 140 to 158 forms a coiled coil; that stretch reads VNVKIAELREALESVVAEQ. R164 and R169 each carry omega-N-methylated arginine. N-linked (GlcNAc...) asparagine glycosylation is present at N172. Residues 179–199 form a helical membrane-spanning segment; it reads VIFYTVGEYIFLAAASGLQVL. The Cytoplasmic portion of the chain corresponds to 200–214; the sequence is YIRKLFSKSVAYNRV. The COPII vesicle coat-binding signature appears at 204–205; it reads LF. The COPI vesicle coat-binding signature appears at 204 to 214; the sequence is LFSKSVAYNRV. Residues 213 to 214 carry the Required for the export from the endoplasmic reticulum to the Golgi motif; that stretch reads RV.

Belongs to the EMP24/GP25L family. In terms of assembly, probably oligomerizes with other members of the EMP24/GP25L family. Associates with the COPI vesicle coat (coatomer). Associates with the COPII vesicle coat (coatomer).

The protein localises to the golgi apparatus. It is found in the cis-Golgi network membrane. It localises to the golgi stack membrane. Its function is as follows. Involved in vesicular protein trafficking. Mainly functions in the early secretory pathway but also in post-Golgi membranes. Thought to act as cargo receptor at the lumenal side for incorporation of secretory cargo molecules into transport vesicles and to be involved in vesicle coat formation at the cytoplasmic side. The chain is Transmembrane emp24 domain-containing protein p24beta3 from Arabidopsis thaliana (Mouse-ear cress).